The primary structure comprises 281 residues: Endochitinase At2g43610 (281 aa).

Positions 1–28 are cleaved as a signal peptide; sequence MATQNAILKKALIIFLFTLTIMTGTAFS. Residues 29–66 enclose the Chitin-binding type-1 domain; sequence QNCGTNGCKGNMCCSRWGYCGTTKAYCGTGCQSGPCNS. Cystine bridges form between C31–C42, C36–C48, C41–C55, and C59–C64. The catalytic stretch occupies residues 86–281; the sequence is GTIASVITPA…GVTPGTNLSC (196 aa). E148 functions as the Proton donor in the catalytic mechanism. A glycan (N-linked (GlcNAc...) asparagine) is linked at N278.

Belongs to the glycosyl hydrolase 19 family. Chitinase class I subfamily.

It carries out the reaction Random endo-hydrolysis of N-acetyl-beta-D-glucosaminide (1-&gt;4)-beta-linkages in chitin and chitodextrins.. The sequence is that of Endochitinase At2g43610 from Arabidopsis thaliana (Mouse-ear cress).